The chain runs to 227 residues: Ubiquitin carboxyl-terminal hydrolase (227 aa).

The UCH catalytic domain maps to T3–A224. C93 functions as the Nucleophile in the catalytic mechanism. Catalysis depends on H164, which acts as the Proton donor.

This sequence belongs to the peptidase C12 family.

The enzyme catalyses Thiol-dependent hydrolysis of ester, thioester, amide, peptide and isopeptide bonds formed by the C-terminal Gly of ubiquitin (a 76-residue protein attached to proteins as an intracellular targeting signal).. In terms of biological role, ubiquitin-protein hydrolase is involved both in the processing of ubiquitin precursors and of ubiquitinated proteins. This enzyme is a thiol protease that recognizes and hydrolyzes a peptide bond at the C-terminal glycine of ubiquitin. The chain is Ubiquitin carboxyl-terminal hydrolase (Uch) from Drosophila melanogaster (Fruit fly).